The following is a 706-amino-acid chain: Integrator complex subunit 13 (706 aa).

A disordered region spans residues 564 to 603 (PPEEEERKKRGRKREDKEDKSEKAVKDYEQEKSWQDSERL). Residues 567 to 622 (EEERKKRGRKREDKEDKSEKAVKDYEQEKSWQDSERLKGILERGKEELAEAEIIKD) adopt a coiled-coil conformation. A Nuclear localization signal (NLS) motif is present at residues 572 to 582 (KRGRKREDKED). A Glycyl lysine isopeptide (Lys-Gly) (interchain with G-Cter in SUMO2) cross-link involves residue Lys611. Over residues 615–636 (AEAEIIKDSPDSPEPPNKKPLV) the composition is skewed to basic and acidic residues. Positions 615 to 650 (AEAEIIKDSPDSPEPPNKKPLVEMDETPQVEKSKGP) are disordered. Phosphoserine occurs at positions 623, 626, and 678. Residues 649-694 (GPVSLLSLWSNRINTANSRKHQEFAGRLNSVNNRAELYQHLKEENG) are cleavage module binding motif (CMBM).

The protein belongs to the Integrator subunit 13 family. Component of the Integrator complex, composed of core subunits INTS1, INTS2, INTS3, INTS4, INTS5, INTS6, INTS7, INTS8, INTS9/RC74, INTS10, INTS11/CPSF3L, INTS12, INTS13, INTS14 and INTS15. The core complex associates with protein phosphatase 2A subunits PPP2CA and PPP2R1A, to form the Integrator-PP2A (INTAC) complex. INTS13 is part of the tail subcomplex, composed of INTS10, INTS13, INTS14 and INTS15. Interacts with transcription factors ZNF609 and ZNF655. Interacts with PAFAH1B1; this interaction may be required for proper recruitment of dynein complexes to the nuclear envelope at prophase. Widely expressed. Tends to be up-regulated in seminomas compared to normal testis.

The protein localises to the nucleus. It is found in the cytoplasm. In terms of biological role, component of the integrator complex, a multiprotein complex that terminates RNA polymerase II (Pol II) transcription in the promoter-proximal region of genes. The integrator complex provides a quality checkpoint during transcription elongation by driving premature transcription termination of transcripts that are unfavorably configured for transcriptional elongation: the complex terminates transcription by (1) catalyzing dephosphorylation of the C-terminal domain (CTD) of Pol II subunit POLR2A/RPB1 and SUPT5H/SPT5, (2) degrading the exiting nascent RNA transcript via endonuclease activity and (3) promoting the release of Pol II from bound DNA. The integrator complex is also involved in terminating the synthesis of non-coding Pol II transcripts, such as enhancer RNAs (eRNAs), small nuclear RNAs (snRNAs), telomerase RNAs and long non-coding RNAs (lncRNAs). Within the integrator complex, INTS13 is part of the integrator tail module and acts as a platform for the recruitment of transcription factors at promoters. At prophase, mediates recruitment of cytoplasmic dynein to the nuclear envelope, a step important for proper centrosome-nucleus coupling. At G2/M phase, may be required for proper spindle formation and execution of cytokinesis. This is Integrator complex subunit 13 from Homo sapiens (Human).